Consider the following 291-residue polypeptide: Aspartate carbamoyltransferase catalytic subunit (291 aa).

2 residues coordinate carbamoyl phosphate: arginine 49 and threonine 50. Lysine 77 is a binding site for L-aspartate. 3 residues coordinate carbamoyl phosphate: arginine 99, histidine 127, and glutamine 130. L-aspartate-binding residues include arginine 160 and arginine 210. Residues glycine 249 and proline 250 each contribute to the carbamoyl phosphate site.

Belongs to the aspartate/ornithine carbamoyltransferase superfamily. ATCase family. As to quaternary structure, heterododecamer (2C3:3R2) of six catalytic PyrB chains organized as two trimers (C3), and six regulatory PyrI chains organized as three dimers (R2).

It carries out the reaction carbamoyl phosphate + L-aspartate = N-carbamoyl-L-aspartate + phosphate + H(+). It participates in pyrimidine metabolism; UMP biosynthesis via de novo pathway; (S)-dihydroorotate from bicarbonate: step 2/3. In terms of biological role, catalyzes the condensation of carbamoyl phosphate and aspartate to form carbamoyl aspartate and inorganic phosphate, the committed step in the de novo pyrimidine nucleotide biosynthesis pathway. In Sulfurimonas denitrificans (strain ATCC 33889 / DSM 1251) (Thiomicrospira denitrificans (strain ATCC 33889 / DSM 1251)), this protein is Aspartate carbamoyltransferase catalytic subunit.